A 579-amino-acid chain; its full sequence is DELLA protein RGA2 (579 aa).

Residues 1–31 are disordered; that stretch reads MKRDLHQFQGPPDTRFPNHGTANTGSSSKDK. A DELLA motif motif is present at residues 45 to 49; sequence DELLA. 2 stretches are compositionally biased toward low complexity: residues 149–162 and 174–183; these read SSSS…NSQS and SLVTGTTVTT. Residues 149 to 183 form a disordered region; the sequence is SSSSSNQAGDNSQSTKRLKSCSSPDSLVTGTTVTT. The GRAS domain occupies 205–574; that stretch reads VDSQENGVRL…RPLITTSAWK (370 aa). Residues 212–266 form a leucine repeat I (LRI) region; the sequence is VRLVHALMACAEAIQNNDLSIAEALVKQIGFLAVSQAGAMRKVATYFAEALARRI. A VHIID region spans residues 285–350; that stretch reads QMHFYETCPY…GGPPVFRLTG (66 aa). Positions 316–320 match the VHIID motif; sequence VHVID. A leucine repeat II (LRII) region spans residues 364–396; that stretch reads EVGCKLAQLAEAIHVEFEYRGFVANSLADLDAS. Residues 408–495 are PFYRE; that stretch reads VAVNSVFELH…EVYLGKQICN (88 aa). An LXXLL motif motif is present at residues 416–420; sequence LHKLL. An SAW region spans residues 498-574; the sequence is ACEGPDRVER…RPLITTSAWK (77 aa).

Belongs to the GRAS family. DELLA subfamily. Post-translationally, phosphorylated. Ubiquitinated. Upon GA application it is ubiquitinated, leading to its subsequent degradation.

It is found in the nucleus. In terms of biological role, probable transcriptional regulator that acts as a repressor of the gibberellin (GA) signaling pathway. Probably acts by participating in large multiprotein complexes that represses transcription of GA-inducible genes. Upon GA application, it is degraded by the proteasome, allowing the GA signaling pathway. This is DELLA protein RGA2 (RGA2) from Brassica campestris (Field mustard).